The following is a 320-amino-acid chain: Cyclin-H (320 aa).

Serine 5 carries the phosphoserine; by CDK8 modification. Position 132 is a phosphoserine (serine 132). Position 304 is a phosphoserine; by CDK8 (serine 304).

It belongs to the cyclin family. Cyclin C subfamily. As to quaternary structure, associates primarily with CDK7 and MAT1 to form the CAK complex. CAK can further associate with the core-TFIIH to form the TFIIH basal transcription factor.

Its subcellular location is the nucleus. Functionally, regulates CDK7, the catalytic subunit of the CDK-activating kinase (CAK) enzymatic complex. CAK activates the cyclin-associated kinases CDK1, CDK2, CDK4 and CDK6 by threonine phosphorylation. CAK complexed to the core-TFIIH basal transcription factor activates RNA polymerase II by serine phosphorylation of the repetitive C-terminal domain (CTD) of its large subunit (POLR2A), allowing its escape from the promoter and elongation of the transcripts. Involved in cell cycle control and in RNA transcription by RNA polymerase II. Its expression and activity are constant throughout the cell cycle. This is Cyclin-H (CCNH) from Bos taurus (Bovine).